A 978-amino-acid polypeptide reads, in one-letter code: Rab3 GTPase-activating protein catalytic subunit (978 aa).

Disordered stretches follow at residues 533–554 (EGKKGNPLYSSSESSVNKTASD), 586–621 (HSDTEELKESGQESARKAKEETKENPSPKPEGRLHQ), and 908–936 (EEEPKRSSSSDDRRQTSGTDFPSPAGREL). Residues 540–554 (LYSSSESSVNKTASD) show a composition bias toward polar residues. Basic and acidic residues-rich tracts occupy residues 586–619 (HSDTEELKESGQESARKAKEETKENPSPKPEGRL) and 909–922 (EEPKRSSSSDDRRQ).

Belongs to the Rab3-GAP catalytic subunit family. The Rab3 GTPase-activating complex is a heterodimer composed of rab3gap1 and rab3gap2. The Rab3 GTPase-activating complex interacts with DMXL2. Interacts with LMAN1.

The protein localises to the cytoplasm. It is found in the endoplasmic reticulum. It localises to the golgi apparatus. The protein resides in the cis-Golgi network. Functionally, catalytic subunit of the Rab3 GTPase-activating (Rab3GAP) complex composed of rab3gap1 and rab3gap2, which has GTPase-activating protein (GAP) activity towards various Rab3 subfamily members (RAB3A, RAB3B, RAB3C and RAB3D), RAB5A and RAB43, and guanine nucleotide exchange factor (GEF) activity towards RAB18. As part of the Rab3GAP complex, acts as a GAP for Rab3 proteins by converting active RAB3-GTP to the inactive form RAB3-GDP. Rab3 proteins are involved in regulated exocytosis of neurotransmitters and hormones. The Rab3GAP complex, acts as a GEF for RAB18 by promoting the conversion of inactive RAB18-GDP to the active form RAB18-GTP. Recruits and stabilizes RAB18 at the cis-Golgi membrane where RAB18 is most likely activated. Also involved in RAB18 recruitment at the endoplasmic reticulum (ER) membrane where it maintains proper ER structure. Required for normal eye and brain development. May participate in neurodevelopmental processes such as proliferation, migration and differentiation before synapse formation, and non-synaptic vesicular release of neurotransmitters. This chain is Rab3 GTPase-activating protein catalytic subunit (rab3gap1), found in Xenopus laevis (African clawed frog).